The sequence spans 379 residues: RING finger protein 215 (379 aa).

Disordered stretches follow at residues 1-21 (MGSADRPALRSPSLPPPPPSP) and 44-63 (AADGSEPATGEGRGGARSVR). Topologically, residues 1–24 (MGSADRPALRSPSLPPPPPSPPSP) are cytoplasmic. Residues 25–45 (LLLLLPLLPLWLGLMGPGAAA) form a helical membrane-spanning segment. Residues 46 to 252 (DGSEPATGEG…GGAQAQEQKP (207 aa)) are Extracellular-facing. The N-linked (GlcNAc...) asparagine glycan is linked to Asn-188. The helical transmembrane segment at 253–273 (LQQLWNAILLVAMLLCTGLVV) threads the bilayer. Residues 274-379 (QAQRQASRQN…NVLGNHYSDD (106 aa)) are Cytoplasmic-facing. The RING-type; atypical zinc finger occupies 327 to 368 (CAVCLDYFCNKQWLRVLPCKHEFHRDCVDPWLMLQQTCPLCK).

It is found in the membrane. In Mus musculus (Mouse), this protein is RING finger protein 215 (Rnf215).